Here is a 313-residue protein sequence, read N- to C-terminus: MLKMESTQQMVSSIINTSFEAAVVAATSTLELMGIQYDYNEVFTRVKSKFDYVMDDSGVKNNLLGKAITIDQALNGKFGSAIRNRNWMIDSKTVAKLDEDVNKLRMTLSSKGIDQKMRVLNACFSVKRIPGKSSSIIKCTRLMKDKLERGEVEVDDSYVDEKMEIDTIDWKSRYDQLEKRFESLKQRVNEKYNAWVQKAKKVNENMYSLQNVISQQQNQIADLQQYCNKLEVDLQGKFSSLVSSVEWYLRSMELPDDVKTDVEQQLNSIDLINPINAIDDIESLIRNLIQDYDRTFLMLKGLLKQCNYEYAYE.

The RNA-binding stretch occupies residues 1-149 (MLKMESTQQM…TRLMKDKLER (149 aa)). Positions 150 to 206 (GEVEVDDSYVDEKMEIDTIDWKSRYDQLEKRFESLKQRVNEKYNAWVQKAKKVNENM) are dimerization. Residues 166 to 237 (DTIDWKSRYD…NKLEVDLQGK (72 aa)) adopt a coiled-coil conformation. Residues 170–234 (WKSRYDQLEK…QYCNKLEVDL (65 aa)) are interaction with host ZC3H7B. Residues 208 to 313 (SLQNVISQQQ…KQCNYEYAYE (106 aa)) are interaction with host EIF4G1.

It belongs to the rotavirus NSP3 family. As to quaternary structure, homodimer. Interacts (via the coiled-coil region) with host ZC3H7B (via LD motif). Interacts with host EIF4G1.

The protein resides in the host cytoplasm. Functionally, plays an important role in stimulating the translation of viral mRNAs. These mRNAs are capped but not polyadenylated, instead terminating in a conserved sequence 'GACC' at the 3' that is recognized by NSP3, which competes with host PABPC1 for EIF4G1 binding. The interaction between NSP3 and host EIF4G1 stabilizes the EIF4E-EIF4G1 interaction, thereby facilitating the initiation of capped mRNA translation. This is Non-structural protein 3 from Homo sapiens (Human).